The primary structure comprises 1889 residues: E3 ubiquitin-protein ligase UBR3 (1889 aa).

The segment at 1–27 (MAAAAAAAAVGDPQPPQPEAPAQGLAL) is disordered. The UBR-type zinc-finger motif lies at 118 to 189 (ALCGLVWTAN…ESGFCRRHQI (72 aa)). The segment at 338 to 362 (LGQIDSSDEEDQDGSQGLGKRKRVK) is disordered. Phosphoserine is present on residues serine 343 and serine 344. The next 2 helical transmembrane spans lie at 761-781 (MLEG…HLGM) and 919-939 (LLHC…ILMD). The stretch at 1167–1199 (KKITAAEKKTLDKEERRQKARERQQKLLAEFAS) forms a coiled coil. Phosphoserine is present on serine 1199. The RING-type; degenerate zinc finger occupies 1306–1364 (DSSCLLAVSIGWEGGVYVQTCGHTLHIDCHKSYMESLRNDQVLQGFSVDKGEFTCPLCR). A helical membrane pass occupies residues 1807 to 1827 (QNCGAGTGIFLLINASVIIII).

This sequence belongs to the E3 ubiquitin-protein ligase UBR1-like family. Interacts with UBE2A and UBE2B. Expressed in numerous cells of the smell, touch, vision, hearing and taste senses. Expressed in cells of the olfactory pathway, including the olfactory cell layer of the main olfactory epithelium (MOE), a mitral neuron cell layer of the olfactory bulb (OB), and a pyramidal cell layer of the piriform cortex of the olfactory cortex (OC). Expressed in the vomeronasal sensory epithelium of the vomeronasal organ (VNO) and the mitral cells of the accessory olfactory bulb. Expressed in tactile tissues, including the dorsal root ganglion, trigeminal ganglion and follicle-sinus complexes. Expressed in cells between hair follicle and sinus and also in the region of the rete ridge collar. Expressed in taste buds of the fungiform, circumvallate, and foliate papillae. Expressed in the spiral ganglion, the organ of Corti of the cochlea in the inner ear, in the sensory epithelium of macula and vestibular ganglion of the balancing system (at protein level). Expressed in the liver and skeletal muscle.

The protein localises to the membrane. It carries out the reaction S-ubiquitinyl-[E2 ubiquitin-conjugating enzyme]-L-cysteine + [acceptor protein]-L-lysine = [E2 ubiquitin-conjugating enzyme]-L-cysteine + N(6)-ubiquitinyl-[acceptor protein]-L-lysine.. The protein operates within protein modification; protein ubiquitination. E3 ubiquitin-protein ligase which is a component of the N-end rule pathway. Does not bind to proteins bearing specific N-terminal residues that are destabilizing according to the N-end rule, leading to their ubiquitination and subsequent degradation. May play a role in Shh signaling by mediating the ubiquitination of Kif7. May be important for MYH9 function in certain tissues, possibly by regulating the ubiquitination of MYH9 and consequently affecting its interaction with MYO7A. The protein is E3 ubiquitin-protein ligase UBR3 (Ubr3) of Mus musculus (Mouse).